A 221-amino-acid chain; its full sequence is Tetraspanin-2 (221 aa).

The Cytoplasmic segment spans residues 1 to 13 (MGRFRGGLRCIKY). Residues 14 to 34 (LLLGFNLLFWLAGSAVIAFGL) form a helical membrane-spanning segment. The Extracellular portion of the chain corresponds to 35–54 (WFRFGGTIKDLSSEEKSPEY). The helical transmembrane segment at 55 to 75 (FYVGLYVLVGAGALMMAVGFF) threads the bilayer. At 76-90 (GCCGAMRESQCVLGS) the chain is on the cytoplasmic side. Residues 91–111 (FFTCLLVIFAAEVTTGVFAFI) form a helical membrane-spanning segment. The Extracellular segment spans residues 112-188 (GKDVAIRHVQ…ETIISVKLQL (77 aa)). N-linked (GlcNAc...) asparagine glycosylation is present at N139. Residues 189-209 (IGIVGIGIAGLTIFGMIFSMV) traverse the membrane as a helical segment. Topologically, residues 210–221 (LCCAIRNSRDVI) are cytoplasmic.

The protein belongs to the tetraspanin (TM4SF) family. In terms of tissue distribution, expression is restricted to the nervous system.

Its subcellular location is the membrane. In terms of biological role, may play a role in signalling in oligodendrocytes in the early stages of their terminal differentiation into myelin-forming glia and may also function in stabilizing the mature sheath. The polypeptide is Tetraspanin-2 (Tspan2) (Rattus norvegicus (Rat)).